Here is a 284-residue protein sequence, read N- to C-terminus: Pantothenate synthetase (284 aa).

Residue 30–37 (MGNLHDGH) participates in ATP binding. The active-site Proton donor is the H37. Q61 lines the (R)-pantoate pocket. Residue Q61 coordinates beta-alanine. Residue 149-152 (GEKD) participates in ATP binding. Q155 contacts (R)-pantoate. ATP contacts are provided by residues I178 and 186-189 (LSSR).

The protein belongs to the pantothenate synthetase family. Homodimer.

It localises to the cytoplasm. It carries out the reaction (R)-pantoate + beta-alanine + ATP = (R)-pantothenate + AMP + diphosphate + H(+). The protein operates within cofactor biosynthesis; (R)-pantothenate biosynthesis; (R)-pantothenate from (R)-pantoate and beta-alanine: step 1/1. Functionally, catalyzes the condensation of pantoate with beta-alanine in an ATP-dependent reaction via a pantoyl-adenylate intermediate. The sequence is that of Pantothenate synthetase from Salmonella choleraesuis (strain SC-B67).